A 59-amino-acid polypeptide reads, in one-letter code: Small ribosomal subunit protein bS21 (59 aa).

Residues 36–59 (EHYEKPSVKRKKKAEAAKRNKSKF) are disordered. Positions 43–59 (VKRKKKAEAAKRNKSKF) are enriched in basic residues.

Belongs to the bacterial ribosomal protein bS21 family.

This Alkaliphilus oremlandii (strain OhILAs) (Clostridium oremlandii (strain OhILAs)) protein is Small ribosomal subunit protein bS21.